A 336-amino-acid chain; its full sequence is Galactose/methyl galactoside import permease protein MglC (336 aa).

At 1–16 (MSALNKKSFLTYLKEG) the chain is on the periplasmic side. The chain crosses the membrane as a helical span at residues 17-37 (GIYVVLLVLLAIIIFQDPTFL). Residues 38-52 (SLLNLSNILTQSSVR) lie on the Cytoplasmic side of the membrane. A helical transmembrane segment spans residues 53–73 (IIIALGVAGLIVTQGTDLSAG). Over 74–106 (RQVGLAAVVAATLLQSMDNANKVFPEMATMPIA) the chain is Periplasmic. The next 2 membrane-spanning stretches (helical) occupy residues 107–127 (LVILIVCAIGAVIGLINGLII) and 128–148 (AYLNVTPFITTLGTMIIVYGI). At 149–180 (NSLYYDFVGASPISGFDSGFSTFAQGFVALGS) the chain is on the periplasmic side. A helical transmembrane segment spans residues 181–201 (FRLSYITFYALIAVAFVWVLW). Topologically, residues 202-226 (NKTRFGKNIFAIGGNPEAAKVSGVN) are cytoplasmic. A helical transmembrane segment spans residues 227–247 (VGLNLLMIYALSGVFYAFGGM). The Periplasmic segment spans residues 248-256 (LEAGRIGSA). Residues 257-277 (TNNLGFMYELDAIAACVVGGV) traverse the membrane as a helical segment. Position 278 (Ser-278) is a topological domain, cytoplasmic. Residues 279–299 (FSGGVGTVIGVVTGVIIFTVI) form a helical membrane-spanning segment. Residues 300 to 305 (NYGLTY) lie on the Periplasmic side of the membrane. Residues 306–326 (IGVNPYWQYIIKGAIIIFAVA) form a helical membrane-spanning segment. Residues 327-336 (LDSLKYARKK) lie on the Cytoplasmic side of the membrane.

This sequence belongs to the binding-protein-dependent transport system permease family. AraH/RbsC subfamily. The complex is composed of one ATP-binding protein (MglA), two transmembrane proteins (MglC) and a solute-binding protein (MglB).

The protein localises to the cell inner membrane. Part of the ABC transporter complex MglABC involved in galactose/methyl galactoside import. Probably responsible for the translocation of the substrate across the membrane. This is Galactose/methyl galactoside import permease protein MglC (mglC) from Escherichia coli (strain K12).